We begin with the raw amino-acid sequence, 249 residues long: MLRTTVVLLTLAAIAFAAPTSDDIYNNVVIGDIDGAVAKSKELQKQGKGDIITEAVNRLIRDSQRNTMEYAYQLWSLEARDIVKERFPIQFRMMLGEHSIKLINKRDNLAMKLGVATDNSGDRIAYGAADDKTSDRVAWKFVPLSEDKRVYFKILNVQRGQYLKLGVETDSDGEHMAYASSGADTFRHQWYLQPAKADGNLVFFIVNREYNHALKLGRSVDSMGDRQVWGHNGNVIGNPELFGWSVVAF.

Residues 1-17 (MLRTTVVLLTLAAIAFA) form the signal peptide.

Functionally, small vitellogenic protein found in females. It is synthesized in the fat body, secreted into the hemolymph, and taken up by developing oocytes. The chain is Microvitellogenin (MVG) from Manduca sexta (Tobacco hawkmoth).